Reading from the N-terminus, the 198-residue chain is Recombination protein RecR (198 aa).

Residues 57 to 72 (CPVCFNITDAERCDVC) form a C4-type zinc finger. The 94-residue stretch at 80-173 (NLICVVEEPG…VVSRIAYGLP (94 aa)) folds into the Toprim domain.

This sequence belongs to the RecR family.

In terms of biological role, may play a role in DNA repair. It seems to be involved in an RecBC-independent recombinational process of DNA repair. It may act with RecF and RecO. The chain is Recombination protein RecR from Deinococcus deserti (strain DSM 17065 / CIP 109153 / LMG 22923 / VCD115).